The sequence spans 76 residues: Dolichyl-diphosphooligosaccharide--protein glycosyltransferase subunit OST5 (76 aa).

2 helical membrane-spanning segments follow: residues 14–34 (FYPVCAFLFCVIGFAFFATFI) and 54–74 (ALIASMSLGLGLFFVLLAGGI).

The protein belongs to the OST5 family. As to quaternary structure, component of the oligosaccharyltransferase (OST) complex.

The protein localises to the membrane. Functionally, subunit of the oligosaccharyl transferase (OST) complex that catalyzes the initial transfer of a defined glycan (Glc(3)Man(9)GlcNAc(2) in eukaryotes) from the lipid carrier dolichol-pyrophosphate to an asparagine residue within an Asn-X-Ser/Thr consensus motif in nascent polypeptide chains, the first step in protein N-glycosylation. N-glycosylation occurs cotranslationally and the complex associates with the Sec61 complex at the channel-forming translocon complex that mediates protein translocation across the endoplasmic reticulum (ER). All subunits are required for a maximal enzyme activity. The chain is Dolichyl-diphosphooligosaccharide--protein glycosyltransferase subunit OST5 from Dictyostelium discoideum (Social amoeba).